An 88-amino-acid polypeptide reads, in one-letter code: Small ribosomal subunit protein uS17 (88 aa).

Belongs to the universal ribosomal protein uS17 family. In terms of assembly, part of the 30S ribosomal subunit.

In terms of biological role, one of the primary rRNA binding proteins, it binds specifically to the 5'-end of 16S ribosomal RNA. This Lactobacillus delbrueckii subsp. bulgaricus (strain ATCC 11842 / DSM 20081 / BCRC 10696 / JCM 1002 / NBRC 13953 / NCIMB 11778 / NCTC 12712 / WDCM 00102 / Lb 14) protein is Small ribosomal subunit protein uS17.